A 222-amino-acid polypeptide reads, in one-letter code: Countin-3 (222 aa).

The N-terminal stretch at 1-20 (MNKILSLFLITILLISKVMS) is a signal peptide. The region spanning 21–105 (SSEECKLCTD…ESVKMCQYND (85 aa)) is the Saposin B-type domain. 3 disulfides stabilise this stretch: Cys25-Cys101, Cys28-Cys95, and Cys56-Cys68. N-linked (GlcNAc...) asparagine glycosylation is found at Asn108, Asn134, and Asn218.

This sequence belongs to the countin family.

It localises to the secreted. Its function is as follows. May control the size of the multicellular structure. In Dictyostelium discoideum (Social amoeba), this protein is Countin-3 (ctnC).